Consider the following 96-residue polypeptide: Large ribosomal subunit protein eL14 (96 aa).

Belongs to the eukaryotic ribosomal protein eL14 family.

This is Large ribosomal subunit protein eL14 from Saccharolobus solfataricus (strain ATCC 35092 / DSM 1617 / JCM 11322 / P2) (Sulfolobus solfataricus).